Reading from the N-terminus, the 174-residue chain is RxLR effector protein 207 (174 aa).

A signal peptide spans 1-20; sequence MSKVFLLLVLSVFALVSCDA. The short motif at 46–62 is the RxLR-dEER element; that stretch reads RMLRAQEEPTNAADEER. Positions 82 to 99 are disordered; sequence VTNSKLVQSMNNKLASLT.

The protein belongs to the RxLR effector family. As to quaternary structure, interacts with Nicotiana benthamiana ACD11, BPA1 (binding partner of ACD11), as well as BPA-like proteins BPL1, BPL2, BPL3 and BPL4.

It is found in the secreted. It localises to the host cell membrane. Secreted effector that activates ROS-mediated cell death in plant host and is essential for virulence. Plays a role in the transition from the biotrophic to necrotrophic stage. Associates with and promotes the degradation of Nicotiana benthamiana BPA1, BPL1, BPL2, and BPL4 to disrupt ACD11 stabilization in a 26S proteasome-dependent manner. This Phytophthora capsici protein is RxLR effector protein 207.